A 224-amino-acid polypeptide reads, in one-letter code: Transcriptional regulatory protein CiaR (224 aa).

Residues 3-116 (KILLVEDDLG…ELKMRIQALL (114 aa)) enclose the Response regulatory domain. Aspartate 51 is modified (4-aspartylphosphate). Positions 124–222 (ENTLTYGNIV…LRSVGYLLKD (99 aa)) form a DNA-binding region, ompR/PhoB-type.

Phosphorylated by CiaH.

The protein localises to the cytoplasm. Member of the two-component regulatory system CiaH/CiaR. Involved in early steps of competence regulation and in penicillin susceptibility. This is Transcriptional regulatory protein CiaR (ciaR) from Streptococcus pneumoniae (strain ATCC BAA-255 / R6).